Reading from the N-terminus, the 634-residue chain is MINITLPDGSRREFESPVSVMQVAQSIGAGLAKATIAGRVDGQLVDASDVIDHDASLRIITAKDAEGVEIIRHSCAHLVGHAVKQLYPEVKMVIGPVIAEGFYYDIYSERPFTPEDMAAIEQRMQALIAQDYDVIKKVTPRAEVIEVFAQRGEEYKLRLIDDMSDDITAMGLYYHQEYVDMCRGPHVPNTRFLKAFKLTRISGAYWRGDAKNEQLQRIYGTAWADKKQLDAYILRMEEADKRDHRRIGKAQDLFHLQEEAPGLVFWHPKGWSLWQVVEQYMRKVYRDSGYGEVRCPQILDVSLWQKSGHWDNYQDAMFFTESEKRTYAVKPMNCPGHVQVFNQGLHSYRDLPIRYGEFGACHRNEPSGALHGILRVRGFTQDDGHVFCLESQIESEVTAFHQQALAVYTAFGFDDIQIKIALRPEKRLGDDATWDKAEAALRSALGVCGVEWQELPGEGAFYGPKIEYHLKDAIGRTWQLGTMQVDFMMPGRLGAEYVDENSQKKHPVMLHRAIVGSMERFIGILIEHHAGAFPSWLAPVQVVVANITDAQADYVDAVRKTLANQGFRVSADLRNEKIGYKIREHTLQRVPYLLVVGDREKENGAVAVRTRSGEDLGTMTVSAFIERLQAEQAA.

Residues 1–61 (MINITLPDGS…DHDASLRIIT (61 aa)) enclose the TGS domain. Residues 243-534 (DHRRIGKAQD…LIEHHAGAFP (292 aa)) form a catalytic region. Residues C334, H385, and H511 each contribute to the Zn(2+) site.

This sequence belongs to the class-II aminoacyl-tRNA synthetase family. As to quaternary structure, homodimer. It depends on Zn(2+) as a cofactor.

It is found in the cytoplasm. It catalyses the reaction tRNA(Thr) + L-threonine + ATP = L-threonyl-tRNA(Thr) + AMP + diphosphate + H(+). Its function is as follows. Catalyzes the attachment of threonine to tRNA(Thr) in a two-step reaction: L-threonine is first activated by ATP to form Thr-AMP and then transferred to the acceptor end of tRNA(Thr). Also edits incorrectly charged L-seryl-tRNA(Thr). The protein is Threonine--tRNA ligase of Xanthomonas oryzae pv. oryzae (strain MAFF 311018).